Here is a 129-residue protein sequence, read N- to C-terminus: Glycine cleavage system H protein (129 aa).

Residues 24–106 (TYTVGITEHA…YAGGWIFKIK (83 aa)) enclose the Lipoyl-binding domain. Lys65 bears the N6-lipoyllysine mark.

Belongs to the GcvH family. As to quaternary structure, the glycine cleavage system is composed of four proteins: P, T, L and H. (R)-lipoate serves as cofactor.

The glycine cleavage system catalyzes the degradation of glycine. The H protein shuttles the methylamine group of glycine from the P protein to the T protein. The protein is Glycine cleavage system H protein of Escherichia coli O139:H28 (strain E24377A / ETEC).